Reading from the N-terminus, the 197-residue chain is dITP/XTP pyrophosphatase (197 aa).

Position 8 to 13 (8 to 13) interacts with substrate; the sequence is TGNPGK. Positions 40 and 69 each coordinate Mg(2+). D69 (proton acceptor) is an active-site residue. Residues S70, 154–157, K177, and 182–183 each bind substrate; these read FGYD and HR.

It belongs to the HAM1 NTPase family. In terms of assembly, homodimer. The cofactor is Mg(2+).

The catalysed reaction is XTP + H2O = XMP + diphosphate + H(+). It catalyses the reaction dITP + H2O = dIMP + diphosphate + H(+). The enzyme catalyses ITP + H2O = IMP + diphosphate + H(+). Its function is as follows. Pyrophosphatase that catalyzes the hydrolysis of nucleoside triphosphates to their monophosphate derivatives, with a high preference for the non-canonical purine nucleotides XTP (xanthosine triphosphate), dITP (deoxyinosine triphosphate) and ITP. Seems to function as a house-cleaning enzyme that removes non-canonical purine nucleotides from the nucleotide pool, thus preventing their incorporation into DNA/RNA and avoiding chromosomal lesions. This is dITP/XTP pyrophosphatase from Yersinia pestis.